The following is a 338-amino-acid chain: Inositol 2-dehydrogenase 4 (338 aa).

This sequence belongs to the Gfo/Idh/MocA family. Homotetramer.

The catalysed reaction is myo-inositol + NAD(+) = scyllo-inosose + NADH + H(+). Involved in the oxidation of myo-inositol (MI) to 2-keto-myo-inositol (2KMI or 2-inosose). The chain is Inositol 2-dehydrogenase 4 from Saccharopolyspora erythraea (strain ATCC 11635 / DSM 40517 / JCM 4748 / NBRC 13426 / NCIMB 8594 / NRRL 2338).